Here is a 116-residue protein sequence, read N- to C-terminus: Large ribosomal subunit protein bL20 (116 aa).

This sequence belongs to the bacterial ribosomal protein bL20 family.

Functionally, binds directly to 23S ribosomal RNA and is necessary for the in vitro assembly process of the 50S ribosomal subunit. It is not involved in the protein synthesizing functions of that subunit. The chain is Large ribosomal subunit protein bL20 from Picosynechococcus sp. (strain ATCC 27264 / PCC 7002 / PR-6) (Agmenellum quadruplicatum).